A 252-amino-acid polypeptide reads, in one-letter code: MTNYAFKFGYEGSYFTGFQRGNGDHSVEDTIIDTLKASGFDYAIKAAARTDRYVSALSNVFSLETGRSPEAVAGLINSRIDHIYVHSYAEVPDDFNPRHCTFKTYRYYILRQDLDCISLDINLGKFIGTHDFRRFVRADSRNTVRTIINASCKNDNGLLYLEFSARSFLWNQIRTMVAFILDNIGVETDPFSTSERYPRVARAQNLLLWDIYYDGIEFRKVKKIPKKMQGVYENSIMNYILAENLMHRFGIA.

The Nucleophile role is filled by Asp51. Residue Tyr105 coordinates substrate.

It belongs to the tRNA pseudouridine synthase TruA family.

The catalysed reaction is uridine(38/39/40) in tRNA = pseudouridine(38/39/40) in tRNA. Its function is as follows. Formation of pseudouridine at positions 38, 39 and 40 in the anticodon stem and loop of transfer RNAs. The sequence is that of tRNA pseudouridine synthase A from Thermoplasma acidophilum (strain ATCC 25905 / DSM 1728 / JCM 9062 / NBRC 15155 / AMRC-C165).